A 242-amino-acid polypeptide reads, in one-letter code: Transcription factor TCP17 (242 aa).

A TCP domain is found at 33-91 (GKDRHSKVCTVRGLRDRRIRLSVMTAIQVYDLQERLGLSQPSKVIDWLLEVAKNDVDLL).

Interacts with SPL. Expressed in cotyledons, particularly in the vascular region, in leaves, roots, stems, buds, flowers and siliques.

It is found in the nucleus. Functionally, plays a pivotal role in the control of morphogenesis of shoot organs by negatively regulating the expression of boundary-specific genes such as CUC genes, probably through the induction of miRNA (e.g. miR164). Participates in ovule development. This Arabidopsis thaliana (Mouse-ear cress) protein is Transcription factor TCP17 (TCP17).